A 1342-amino-acid chain; its full sequence is DNA-directed RNA polymerase subunit beta (1342 aa).

Belongs to the RNA polymerase beta chain family. The RNAP catalytic core consists of 2 alpha, 1 beta, 1 beta' and 1 omega subunit. When a sigma factor is associated with the core the holoenzyme is formed, which can initiate transcription.

It catalyses the reaction RNA(n) + a ribonucleoside 5'-triphosphate = RNA(n+1) + diphosphate. DNA-dependent RNA polymerase catalyzes the transcription of DNA into RNA using the four ribonucleoside triphosphates as substrates. In Buchnera aphidicola subsp. Acyrthosiphon pisum (strain 5A), this protein is DNA-directed RNA polymerase subunit beta.